We begin with the raw amino-acid sequence, 280 residues long: Large ribosomal subunit protein uL2 (280 aa).

Disordered regions lie at residues 1 to 58 and 226 to 280; these read MAIR…GGGH and MNPV…KHGR. Basic residues-rich tracts occupy residues 37–58 and 268–280; these read LHGH…GGGH and IVRR…KHGR.

This sequence belongs to the universal ribosomal protein uL2 family. Part of the 50S ribosomal subunit. Forms a bridge to the 30S subunit in the 70S ribosome.

In terms of biological role, one of the primary rRNA binding proteins. Required for association of the 30S and 50S subunits to form the 70S ribosome, for tRNA binding and peptide bond formation. It has been suggested to have peptidyltransferase activity; this is somewhat controversial. Makes several contacts with the 16S rRNA in the 70S ribosome. In Mycolicibacterium paratuberculosis (strain ATCC BAA-968 / K-10) (Mycobacterium paratuberculosis), this protein is Large ribosomal subunit protein uL2.